We begin with the raw amino-acid sequence, 290 residues long: Purine nucleoside phosphorylase (290 aa).

Residue 68–69 (RN) coordinates phosphate. Substrate is bound at residue methionine 204. Threonine 205 contacts phosphate.

This sequence belongs to the PNP/MTAP phosphorylase family. MTAP subfamily. Homotrimer.

Its subcellular location is the cytoplasm. The protein resides in the nucleus. The enzyme catalyses a purine D-ribonucleoside + phosphate = a purine nucleobase + alpha-D-ribose 1-phosphate. It participates in purine metabolism; purine nucleoside salvage. In terms of biological role, purine nucleoside phosphorylase involved in purine salvage. This Drosophila melanogaster (Fruit fly) protein is Purine nucleoside phosphorylase.